Consider the following 575-residue polypeptide: Phosphoenolpyruvate-protein phosphotransferase (575 aa).

Histidine 191 functions as the Tele-phosphohistidine intermediate in the catalytic mechanism. Residues arginine 298 and arginine 334 each coordinate phosphoenolpyruvate. Residues glutamate 435 and aspartate 459 each contribute to the Mg(2+) site. Phosphoenolpyruvate contacts are provided by residues 458 to 459 (ND) and arginine 469. Catalysis depends on cysteine 506, which acts as the Proton donor.

This sequence belongs to the PEP-utilizing enzyme family. Homodimer. Requires Mg(2+) as cofactor.

The protein resides in the cytoplasm. It catalyses the reaction L-histidyl-[protein] + phosphoenolpyruvate = N(pros)-phospho-L-histidyl-[protein] + pyruvate. Functionally, general (non sugar-specific) component of the phosphoenolpyruvate-dependent sugar phosphotransferase system (sugar PTS). This major carbohydrate active-transport system catalyzes the phosphorylation of incoming sugar substrates concomitantly with their translocation across the cell membrane. Enzyme I transfers the phosphoryl group from phosphoenolpyruvate (PEP) to the phosphoryl carrier protein (HPr). In Enterococcus faecalis (strain ATCC 700802 / V583), this protein is Phosphoenolpyruvate-protein phosphotransferase (ptsI).